We begin with the raw amino-acid sequence, 1589 residues long: Pentafunctional AROM polypeptide (1589 aa).

Residues Met1–Asp392 are 3-dehydroquinate synthase. Residues Asp43–Asn45, Glu78–Lys81, Gly109–Ile111, and Asp114 contribute to the NAD(+) site. Arg125 provides a ligand contact to 7-phospho-2-dehydro-3-deoxy-D-arabino-heptonate. Thr134–Ser135 lines the NAD(+) pocket. Residues Asp141 and Lys147 each coordinate 7-phospho-2-dehydro-3-deoxy-D-arabino-heptonate. Lys156 contributes to the NAD(+) binding site. Asn157 is a 7-phospho-2-dehydro-3-deoxy-D-arabino-heptonate binding site. NAD(+) contacts are provided by residues Trp174–Thr177 and Asn185. Glu189 provides a ligand contact to Zn(2+). 7-phospho-2-dehydro-3-deoxy-D-arabino-heptonate is bound by residues Glu189–Lys192 and Lys258. Glu268 functions as the Proton acceptor; for 3-dehydroquinate synthase activity in the catalytic mechanism. Residues Arg272–Asn276 and His279 each bind 7-phospho-2-dehydro-3-deoxy-D-arabino-heptonate. His279 is a Zn(2+) binding site. Residue His283 is the Proton acceptor; for 3-dehydroquinate synthase activity of the active site. His295 and Lys364 together coordinate 7-phospho-2-dehydro-3-deoxy-D-arabino-heptonate. His295 contacts Zn(2+). Residues Val405 to Ala872 are EPSP synthase. Cys854 serves as the catalytic For EPSP synthase activity. The segment at Ser891–Cys1081 is shikimate kinase. An ATP-binding site is contributed by Gly896 to Ser903. Positions Leu1082 to Gln1294 are 3-dehydroquinase. His1199 (proton acceptor; for 3-dehydroquinate dehydratase activity) is an active-site residue. Lys1228 acts as the Schiff-base intermediate with substrate; for 3-dehydroquinate dehydratase activity in catalysis. Positions Ser1307–Asp1589 are shikimate dehydrogenase.

This sequence in the N-terminal section; belongs to the sugar phosphate cyclases superfamily. Dehydroquinate synthase family. In the 2nd section; belongs to the EPSP synthase family. The protein in the 3rd section; belongs to the shikimate kinase family. It in the 4th section; belongs to the type-I 3-dehydroquinase family. This sequence in the C-terminal section; belongs to the shikimate dehydrogenase family. In terms of assembly, homodimer. Requires Zn(2+) as cofactor.

It localises to the cytoplasm. It carries out the reaction 7-phospho-2-dehydro-3-deoxy-D-arabino-heptonate = 3-dehydroquinate + phosphate. The catalysed reaction is 3-dehydroquinate = 3-dehydroshikimate + H2O. It catalyses the reaction shikimate + NADP(+) = 3-dehydroshikimate + NADPH + H(+). The enzyme catalyses shikimate + ATP = 3-phosphoshikimate + ADP + H(+). It carries out the reaction 3-phosphoshikimate + phosphoenolpyruvate = 5-O-(1-carboxyvinyl)-3-phosphoshikimate + phosphate. The protein operates within metabolic intermediate biosynthesis; chorismate biosynthesis; chorismate from D-erythrose 4-phosphate and phosphoenolpyruvate: step 2/7. It functions in the pathway metabolic intermediate biosynthesis; chorismate biosynthesis; chorismate from D-erythrose 4-phosphate and phosphoenolpyruvate: step 3/7. It participates in metabolic intermediate biosynthesis; chorismate biosynthesis; chorismate from D-erythrose 4-phosphate and phosphoenolpyruvate: step 4/7. Its pathway is metabolic intermediate biosynthesis; chorismate biosynthesis; chorismate from D-erythrose 4-phosphate and phosphoenolpyruvate: step 5/7. The protein operates within metabolic intermediate biosynthesis; chorismate biosynthesis; chorismate from D-erythrose 4-phosphate and phosphoenolpyruvate: step 6/7. In terms of biological role, the AROM polypeptide catalyzes 5 consecutive enzymatic reactions in prechorismate polyaromatic amino acid biosynthesis. The polypeptide is Pentafunctional AROM polypeptide (Zygosaccharomyces rouxii (strain ATCC 2623 / CBS 732 / NBRC 1130 / NCYC 568 / NRRL Y-229)).